The sequence spans 497 residues: MASPAPPEHAEEGCPAPAAEEQAPPSPPPPQASPAERQQQEEEAQEAGAAEGAGLQVEEAAGRAAAAVTWLLGEPVLWLGCRADELLSWKRPLRSLLGFVAANLLFWFLALTPWRVYHLISVMILGRVIMQIIKDMVLSRTRGAQLWRSLSESWEVINSKPDERPRLSHCIAESWMNFSIFLQEMSLFKQQSPGKFCLLVCSVCTFFTILGSYIPGVILSYLLLLCAFLCPLFKCNDIGQKIYSKIKSVLLKLDFGIGEYINQKKRERSEADKEKSHKDDSELDFSALCPKISLTVAAKELSVSDTDVSEVSWTDNGTFNLSEGYTPQTDTSDDLDRPSEEVFSRDLSDFPSLENGMGTNDEDELSLGLPTELKRKKEQLDSGHRPSKETQSAAGLTLPLNSDQTFHLMSNLAGDVITAAVTAAIKDQLEGVQQALSQAAPIPEEDTDTEEGDDFELLDQSELDQIESELGLTQDQEAEAQQNKKSSGFLSNLLGGH.

Residues methionine 1–glutamate 51 are disordered. The Cytoplasmic portion of the chain corresponds to methionine 1–glutamate 59. Low complexity predominate over residues glycine 13–alanine 23. The chain crosses the membrane as a helical span at residues alanine 60–glycine 80. Over cysteine 81–serine 95 the chain is Lumenal. Positions aspartate 84 to phenylalanine 233 are reticulon homology domain. A helical membrane pass occupies residues leucine 96–valine 116. Residues tyrosine 117 to histidine 118 are Cytoplasmic-facing. A helical transmembrane segment spans residues leucine 119 to serine 139. The Lumenal portion of the chain corresponds to arginine 140 to threonine 208. Serine 149 carries the phosphoserine modification. Position 151 is a phosphoserine; by CAMK2B (serine 151). At serine 153 the chain carries Phosphoserine. A helical membrane pass occupies residues isoleucine 209 to leucine 229. Residues cysteine 230–histidine 497 are Cytoplasmic-facing. Residues phenylalanine 319–aspartate 330 show a composition bias toward polar residues. 4 disordered regions span residues phenylalanine 319–leucine 365, lysine 377–leucine 396, leucine 436–phenylalanine 455, and serine 468–histidine 497. Composition is skewed to basic and acidic residues over residues aspartate 334–serine 348 and lysine 377–lysine 388. Residues proline 443–phenylalanine 455 show a composition bias toward acidic residues. An LIR motif motif is present at residues aspartate 453 to leucine 458. Polar residues predominate over residues glycine 471 to leucine 490.

The protein belongs to the RETREG family. Homooligomer; oligomerization is enhanced following endoplasmic reticulum stress and is mediated by the reticulon homology domain. Interacts with ATG8 family modifier proteins MAP1LC3A, MAP1LC3B, MAP1LC3C, GABARAP, GABARAPL1 and GABARAPL2. Shows higher affinity for GABARAPL1 than for MAP1LC3A or MAP1LC3B. In terms of processing, phosphorylation at Ser-151 by CAMK2B enhances oligomerization and membrane scission and reticulophagy activity. Overexpressed in esophageal squamous cell carcinoma.

It localises to the golgi apparatus. Its subcellular location is the cis-Golgi network membrane. The protein localises to the endoplasmic reticulum membrane. Functionally, endoplasmic reticulum (ER)-anchored autophagy regulator which mediates ER delivery into lysosomes through sequestration into autophagosomes. Promotes membrane remodeling and ER scission via its membrane bending capacity and targets the fragments into autophagosomes via interaction with ATG8 family proteins. Active under basal conditions. Required for collagen quality control in a LIR motif-dependent manner. Required for long-term survival of nociceptive and autonomic ganglion neurons. In terms of biological role, (Microbial infection) During SARS-CoV-2 infection, RETREG1-mediated reticulophagy is promoted by SARS-CoV-2 ORF3A protein. This induces endoplasmic reticulum stress and inflammatory responses and facilitates viral infection. This chain is Reticulophagy regulator 1, found in Homo sapiens (Human).